Here is a 187-residue protein sequence, read N- to C-terminus: Anterior gradient protein 1 (187 aa).

Residues 1–20 (MQTGLSLVCLVLLCSALGEA) form the signal peptide.

It belongs to the AGR family.

Its subcellular location is the secreted. Its function is as follows. Probably involved in cement gland formation. In Xenopus tropicalis (Western clawed frog), this protein is Anterior gradient protein 1 (ag1).